The chain runs to 1187 residues: Roquin-2 (1187 aa).

Zn(2+) contacts are provided by Cys-14, Cys-17, Cys-33, His-35, Cys-38, Cys-50, and Asp-53. Residues 14 to 54 (CPICYNEFDENVHKPISLGCSHTVCKTCLNKLHRKACPFDQ) form an RING-type; degenerate zinc finger. The tract at residues 91–170 (ENKHYEVAKK…RTVTELILQH (80 aa)) is HEPN-N. Residues 171-325 (QNPQQLSANL…SIIDKLQSPE (155 aa)) form an ROQ region. The HEPN-C stretch occupies residues 326–396 (SFAKSVQELT…GLVDFIQNYS (71 aa)). The C3H1-type zinc-finger motif lies at 410–438 (KYKTSMCRDLRQQGGCPRGTNCTFAHSQE). Disordered stretches follow at residues 527 to 571 (VGTN…GTEL) and 640 to 677 (NVPE…PPPQ). Positions 529–545 (TNAQNAGPSAESVSENK) are enriched in polar residues. Ser-548 carries the phosphoserine modification. Residues 553 to 571 (PVSNAAATSAGPSNFGTEL) show a composition bias toward polar residues. Residues Ser-806, Ser-981, and Ser-1115 each carry the phosphoserine modification.

In terms of assembly, interacts with EDC4. Interacts with CCR4-NOT deadenylase complex. Interacts with MAP3K5; the interaction is probably stimulus-dependent. Post-translationally, proteolytically cleaved by MALT1 in activated CD4(+) T cells; cleavage at Arg-509 is critical for promoting RC3H1 degradation in response to T-cell receptor (TCR) stimulation, and hence is necessary for prolonging the stability of a set of mRNAs controlling Th17 cell differentiation. As to expression, highest levels in lymph node and thymus and slightly lesser amounts in brain, lung, and spleen (at protein level). Very weak expression in heart, muscle, and kidney (at protein level). Expressed in CD4(+) helper T-cells (at protein level).

It localises to the cytoplasm. The protein localises to the P-body. It catalyses the reaction S-ubiquitinyl-[E2 ubiquitin-conjugating enzyme]-L-cysteine + [acceptor protein]-L-lysine = [E2 ubiquitin-conjugating enzyme]-L-cysteine + N(6)-ubiquitinyl-[acceptor protein]-L-lysine.. Its pathway is protein modification; protein ubiquitination. With respect to regulation, binding to dsRNA, but not CDE RNA, crosstalks with the E3 ubiquitin ligase activity and may inhibit ubiquitination. Post-transcriptional repressor of mRNAs containing a conserved stem loop motif, called constitutive decay element (CDE), which is often located in the 3'-UTR, as in HMGXB3, ICOS, IER3, NFKBID, NFKBIZ, PPP1R10, TNF and in many more mRNAs. Binds to CDE and promotes mRNA deadenylation and degradation. This process does not involve miRNAs. In follicular helper T (Tfh) cells, represses of ICOS and TNFRSF4 expression, thus preventing spontaneous Tfh cell differentiation, germinal center B-cell differentiation in the absence of immunization and autoimmunity. In resting or LPS-stimulated macrophages, controls inflammation by suppressing TNF expression. Also recognizes CDE in its own mRNA and in that of paralogous RC3H1, possibly leading to feedback loop regulation. Inhibits cooperatively with ZC3H12A the differentiation of helper T cells Th17 in lungs. They repress target mRNA encoding the Th17 cell-promoting factors IL6, ICOS, REL, IRF4, NFKBID and NFKBIZ. The cooperation requires RNA-binding by RC3H1 and the nuclease activity of ZC3H12A. miRNA-binding protein that regulates microRNA homeostasis. Enhances DICER-mediated processing of pre-MIR146a but reduces mature MIR146a levels through an increase of 3' end uridylation. Both inhibits ICOS mRNA expression and they may act together to exert the suppression. Acts as a ubiquitin E3 ligase. Pairs with E2 enzymes UBE2B, UBE2D2, UBE2E2, UBE2E3, UBE2G2, UBE2K and UBE2Q2 and produces polyubiquitin chains. Shows the strongest activity when paired with UBE2N:UBE2V1 or UBE2N:UBE2V2 E2 complexes and generate both short and long polyubiquitin chains. Involved in the ubiquitination of MAP3K5. Able to interact with double-stranded RNA (dsRNA). The protein is Roquin-2 (Rc3h2) of Mus musculus (Mouse).